Here is a 241-residue protein sequence, read N- to C-terminus: Carboxy-S-adenosyl-L-methionine synthase (241 aa).

S-adenosyl-L-methionine is bound by residues tyrosine 38, 63 to 65 (GCS), 88 to 89 (DN), 116 to 117 (DI), asparagine 131, and arginine 198.

The protein belongs to the class I-like SAM-binding methyltransferase superfamily. Cx-SAM synthase family. In terms of assembly, homodimer.

The enzyme catalyses prephenate + S-adenosyl-L-methionine = carboxy-S-adenosyl-L-methionine + 3-phenylpyruvate + H2O. In terms of biological role, catalyzes the conversion of S-adenosyl-L-methionine (SAM) to carboxy-S-adenosyl-L-methionine (Cx-SAM). This is Carboxy-S-adenosyl-L-methionine synthase from Actinobacillus pleuropneumoniae serotype 5b (strain L20).